The chain runs to 290 residues: Protease HtpX (290 aa).

2 consecutive transmembrane segments (helical) span residues 6–26 (LFLVTNLAVMLVLGVVLNILF) and 36–56 (ISGLLVFCAVFGFGGSFISLL). Histidine 143 contacts Zn(2+). Glutamate 144 is a catalytic residue. Histidine 147 contributes to the Zn(2+) binding site. Transmembrane regions (helical) follow at residues 158 to 178 (LIQGVVNTFVMFFARIVAGVI) and 200 to 220 (ITVFVLEMLFGVLASIIVMWF). Residue glutamate 225 coordinates Zn(2+).

This sequence belongs to the peptidase M48B family. Requires Zn(2+) as cofactor.

It localises to the cell inner membrane. In Aeromonas hydrophila subsp. hydrophila (strain ATCC 7966 / DSM 30187 / BCRC 13018 / CCUG 14551 / JCM 1027 / KCTC 2358 / NCIMB 9240 / NCTC 8049), this protein is Protease HtpX.